The sequence spans 847 residues: Leucine--tRNA ligase (847 aa).

Residues Pro43–His53 carry the 'HIGH' region motif. Positions Lys607–Ser611 match the 'KMSKS' region motif. Lys610 provides a ligand contact to ATP.

It belongs to the class-I aminoacyl-tRNA synthetase family.

It localises to the cytoplasm. The enzyme catalyses tRNA(Leu) + L-leucine + ATP = L-leucyl-tRNA(Leu) + AMP + diphosphate. This chain is Leucine--tRNA ligase, found in Buchnera aphidicola subsp. Cinara cedri (strain Cc).